A 465-amino-acid chain; its full sequence is Cysteine--tRNA ligase (465 aa).

Residue Cys29 participates in Zn(2+) binding. A 'HIGH' region motif is present at residues 31–41 (PTVYNYIHIGN). 3 residues coordinate Zn(2+): Cys209, His234, and Glu238. The 'KMSKS' region signature appears at 266–270 (KMSKS). Lys269 contributes to the ATP binding site. At Ser270 the chain carries Phosphoserine.

The protein belongs to the class-I aminoacyl-tRNA synthetase family. As to quaternary structure, monomer. Zn(2+) is required as a cofactor.

The protein localises to the cytoplasm. The catalysed reaction is tRNA(Cys) + L-cysteine + ATP = L-cysteinyl-tRNA(Cys) + AMP + diphosphate. This is Cysteine--tRNA ligase from Bacillus cereus (strain 03BB102).